A 129-amino-acid chain; its full sequence is Probable tautomerase YrdN (129 aa).

The active-site Proton acceptor; via imino nitrogen is the P2.

Belongs to the 4-oxalocrotonate tautomerase family.

Putative target of GltR. This Bacillus subtilis (strain 168) protein is Probable tautomerase YrdN (yrdN).